A 194-amino-acid chain; its full sequence is Imidazoleglycerol-phosphate dehydratase (194 aa).

The protein belongs to the imidazoleglycerol-phosphate dehydratase family.

Its subcellular location is the cytoplasm. It catalyses the reaction D-erythro-1-(imidazol-4-yl)glycerol 3-phosphate = 3-(imidazol-4-yl)-2-oxopropyl phosphate + H2O. It functions in the pathway amino-acid biosynthesis; L-histidine biosynthesis; L-histidine from 5-phospho-alpha-D-ribose 1-diphosphate: step 6/9. This Clostridium kluyveri (strain NBRC 12016) protein is Imidazoleglycerol-phosphate dehydratase.